A 299-amino-acid chain; its full sequence is Zinc finger protein 414 (299 aa).

2 stretches are compositionally biased toward polar residues: residues 1–20 (MEELSGPSSDTLATVESSSN) and 70–80 (SCQTSSTTRGV). A disordered region spans residues 1 to 102 (MEELSGPSSD…PPPGKQIPCS (102 aa)). 2 consecutive C2H2-type zinc fingers follow at residues 99-123 (IPCSSPGCSLSFPSVRDLAQHLRTH) and 135-159 (FRCSALSCTESFPSMQELVAHGKLH). Residues 166–190 (FKCENCLLRFRTHRSLFKHLHVCID) form a C2H2-type 3; degenerate zinc finger. 2 disordered regions span residues 193–228 (QNPAPPPPPALDKEPPVPERPPESDPSSSLGLPFPL) and 254–299 (PRLR…GACR). The span at 203-215 (LDKEPPVPERPPE) shows a compositional bias: basic and acidic residues. The span at 217–228 (DPSSSLGLPFPL) shows a compositional bias: low complexity. Residues 268 to 285 (TSSTAIWKKSQGATSSPR) show a composition bias toward polar residues.

The protein belongs to the krueppel C2H2-type zinc-finger protein family.

It localises to the nucleus. May be involved in transcriptional regulation. In Rattus norvegicus (Rat), this protein is Zinc finger protein 414 (Znf414).